The sequence spans 444 residues: Tubulin beta chain (444 aa).

Positions 11, 69, 138, 142, 143, 144, 204, and 226 each coordinate GTP. A Mg(2+)-binding site is contributed by Glu-69.

It belongs to the tubulin family. As to quaternary structure, dimer of alpha and beta chains. A typical microtubule is a hollow water-filled tube with an outer diameter of 25 nm and an inner diameter of 15 nM. Alpha-beta heterodimers associate head-to-tail to form protofilaments running lengthwise along the microtubule wall with the beta-tubulin subunit facing the microtubule plus end conferring a structural polarity. Microtubules usually have 13 protofilaments but different protofilament numbers can be found in some organisms and specialized cells. Mg(2+) is required as a cofactor.

The protein localises to the cytoplasm. It is found in the cytoskeleton. Functionally, tubulin is the major constituent of microtubules, a cylinder consisting of laterally associated linear protofilaments composed of alpha- and beta-tubulin heterodimers. Microtubules grow by the addition of GTP-tubulin dimers to the microtubule end, where a stabilizing cap forms. Below the cap, tubulin dimers are in GDP-bound state, owing to GTPase activity of alpha-tubulin. This chain is Tubulin beta chain (TBB), found in Onchocerca gibsoni.